A 232-amino-acid chain; its full sequence is 2,3,4,5-tetrahydropyridine-2,6-dicarboxylate N-acetyltransferase (232 aa).

Belongs to the transferase hexapeptide repeat family. DapH subfamily.

It catalyses the reaction (S)-2,3,4,5-tetrahydrodipicolinate + acetyl-CoA + H2O = L-2-acetamido-6-oxoheptanedioate + CoA. It functions in the pathway amino-acid biosynthesis; L-lysine biosynthesis via DAP pathway; LL-2,6-diaminopimelate from (S)-tetrahydrodipicolinate (acetylase route): step 1/3. Catalyzes the transfer of an acetyl group from acetyl-CoA to tetrahydrodipicolinate. This chain is 2,3,4,5-tetrahydropyridine-2,6-dicarboxylate N-acetyltransferase, found in Streptococcus pneumoniae serotype 4 (strain ATCC BAA-334 / TIGR4).